Reading from the N-terminus, the 432-residue chain is Glyceraldehyde-3-phosphate dehydrogenase, testis-specific (432 aa).

Positions Met-1–Ala-97 are testis-specific N-terminal extension. The disordered stretch occupies residues Pro-40 to Thr-101. Over residues Lys-44–Pro-55 the composition is skewed to basic and acidic residues. Pro residues-rich tracts occupy residues Pro-56–Ile-67 and Ala-75–Lys-95. Residues Arg-109 to Ile-110, Asp-130, Lys-175, Tyr-197, and Thr-217 each bind NAD(+). Residues Ser-247–Thr-249, Thr-278, Thr-307–Gly-308, and Arg-330 each bind D-glyceraldehyde 3-phosphate. Residue Cys-248 is the Nucleophile of the active site. Ser-350 carries the post-translational modification Phosphoserine. Asn-412 contributes to the NAD(+) binding site.

The protein belongs to the glyceraldehyde-3-phosphate dehydrogenase family. As to quaternary structure, homotetramer. In terms of tissue distribution, expressed in both head and flagellum of epididymal sperm.

The protein localises to the cytoplasm. The catalysed reaction is D-glyceraldehyde 3-phosphate + phosphate + NAD(+) = (2R)-3-phospho-glyceroyl phosphate + NADH + H(+). Its pathway is carbohydrate degradation; glycolysis; pyruvate from D-glyceraldehyde 3-phosphate: step 1/5. In terms of biological role, may play an important role in regulating the switch between different pathways for energy production during spermiogenesis and in the spermatozoon. Required for sperm motility and male fertility. This Rattus norvegicus (Rat) protein is Glyceraldehyde-3-phosphate dehydrogenase, testis-specific (Gapdhs).